The sequence spans 232 residues: Phosphatidylserine decarboxylase proenzyme (232 aa).

Residue serine 190 is the Schiff-base intermediate with substrate; via pyruvic acid of the active site. Serine 190 is subject to Pyruvic acid (Ser); by autocatalysis.

The protein belongs to the phosphatidylserine decarboxylase family. PSD-A subfamily. Heterodimer of a large membrane-associated beta subunit and a small pyruvoyl-containing alpha subunit. The cofactor is pyruvate. In terms of processing, is synthesized initially as an inactive proenzyme. Formation of the active enzyme involves a self-maturation process in which the active site pyruvoyl group is generated from an internal serine residue via an autocatalytic post-translational modification. Two non-identical subunits are generated from the proenzyme in this reaction, and the pyruvate is formed at the N-terminus of the alpha chain, which is derived from the carboxyl end of the proenzyme. The post-translation cleavage follows an unusual pathway, termed non-hydrolytic serinolysis, in which the side chain hydroxyl group of the serine supplies its oxygen atom to form the C-terminus of the beta chain, while the remainder of the serine residue undergoes an oxidative deamination to produce ammonia and the pyruvoyl prosthetic group on the alpha chain.

The protein resides in the cell membrane. The catalysed reaction is a 1,2-diacyl-sn-glycero-3-phospho-L-serine + H(+) = a 1,2-diacyl-sn-glycero-3-phosphoethanolamine + CO2. The protein operates within phospholipid metabolism; phosphatidylethanolamine biosynthesis; phosphatidylethanolamine from CDP-diacylglycerol: step 2/2. Catalyzes the formation of phosphatidylethanolamine (PtdEtn) from phosphatidylserine (PtdSer). The sequence is that of Phosphatidylserine decarboxylase proenzyme from Cereibacter sphaeroides (strain KD131 / KCTC 12085) (Rhodobacter sphaeroides).